Here is a 290-residue protein sequence, read N- to C-terminus: Glycine--tRNA ligase alpha subunit (290 aa).

This sequence belongs to the class-II aminoacyl-tRNA synthetase family. Tetramer of two alpha and two beta subunits.

It is found in the cytoplasm. It catalyses the reaction tRNA(Gly) + glycine + ATP = glycyl-tRNA(Gly) + AMP + diphosphate. This is Glycine--tRNA ligase alpha subunit from Prochlorococcus marinus (strain NATL2A).